Reading from the N-terminus, the 674-residue chain is MAQAYWQCYPWLVLLCACAWSYPGPESLGREDVRDCSTNPPRLPVTAVNTTMRLAALRQQMEKSNLSAYIIPDTDAHMSEYIGKHDERRAWISGFTGSAGTAVVTKKKAAVWTDSRYWTQAERQMDCNWELHKEVSISSIVAWILAEVPDGENVGFDPFLFSVGSWENYDQELQDSNRHLLSITTNLVDVAWGSERPPVPSQPIYALPKEFTGSTWQEKVSAIRSYMQNHTMAPTGVLLSALDETAWLFNLRSSDIPYNPFFYSYTLLTDSSIRLFVNKSRFSLETLQYLNTNCTLPMCVQLEDYSQIRDGVKAYASGNVKILIGISYTTYGVYDVIPKEKLVTETYSPVMLIKAVKNSKEQALLKASHVRDAVAVIQYLVWLEKNVPKGTVDEFSGAEHIDQLRRNENFSSGPSFETISASGLNAALAHYSPTKELHRKLSLDEMYLVDSGGQYWDGTTDITRTVHWGTPTAFQKEAYTRVLMGNIDLSRLVFPAATSGRVVEAFARRALWEVGLNYGHGTGHGIGNFLCVHEWPVGFQYNNMAMAKGMFTSIEPGYYQDGEFGIRLEDVALVVEAKTKYPGTYLTFELVSFVPYDRNLIDVSLLSPEQLQYLNRYYQTIRENIGPELQRRQLLEEFAWLERHTEPLSASAPHTTSLASMWVASALAILSWSC.

An N-terminal signal peptide occupies residues 1–22 (MAQAYWQCYPWLVLLCACAWSY). Asn-65 carries N-linked (GlcNAc...) asparagine glycosylation. Arg-116 lines the substrate pocket. Asn-278 and Asn-293 each carry an N-linked (GlcNAc...) asparagine glycan. His-430 contacts substrate. Zn(2+)-binding residues include Asp-450, Asp-461, and His-524. Positions 524, 533, and 555 each coordinate substrate. Zn(2+)-binding residues include Glu-555 and Glu-569. Ala-650 carries the GPI-anchor amidated alanine lipid modification. A propeptide spans 651–674 (SAPHTTSLASMWVASALAILSWSC) (removed in mature form).

It belongs to the peptidase M24B family. As to quaternary structure, homotrimer. Requires Zn(2+) as cofactor. In terms of processing, N-glycosylated. As to expression, expressed strongly in lung, liver and heart, and at lower levels in kidney, testis, brain, spleen and skeletal muscle.

Its subcellular location is the cell membrane. It catalyses the reaction Release of any N-terminal amino acid, including proline, that is linked to proline, even from a dipeptide or tripeptide.. Its activity is regulated as follows. Inhibited by the chelating agents 1,10-phenanthroline and EDTA. Inhibited by the thiol-containing compounds 2-mercaptoethanol and dithiothreitol. Also inhibited by apstatin, captopril and p-(ch1oromercuri)benzenesulfonic acid. Weakly inhibited by D,L-2-mercaptomethyl-3-guanidinoethylthiopropanoic acid and N-[l-(R,S)-carboxy-(2-phenylethyl)]-Ala-Ala-Phe-p-aminobenzoate. Inhibited by ramiprilat and enalaprilat, in a Mn(2+)-dependent manner. Metal ions have a complex substrate- and concentration-dependent effect on activity. Activity towards Arg-Pro-Pro and Gly-Pro-Hyp is stimulated by Mn(2+) ion concentrations of 10-100 uM and then inhibited at Mn(2+) concentrations of 1-2 mM. Mn(2+) concentrations in excess of 2 mM stimulate activity towards Gly-Pro-Hyp but inhibit activity towards Arg-Pro-Pro. Zn(2+) and Co(2+) ions also inhibit activity towards Arg-Pro-Pro at high concentrations. Activity towards bradykinin is inhibited by Mn(2+) concentrations in excess of 1 mM. Functionally, membrane-bound metalloprotease which catalyzes the removal of a penultimate prolyl residue from the N-termini of peptides, such as Arg-Pro-Pro. May play a role in the metabolism of the vasodilator bradykinin. This Rattus norvegicus (Rat) protein is Xaa-Pro aminopeptidase 2.